Consider the following 390-residue polypeptide: MSGNTIGKLFCVTSFGESHGPAIGCIVDGCPPGLVLSAMDIQLELDRRKPGTSRHVTQRHEGDRVEILSGVFDNITTGTPIALLIRNEDQRSKDYSKIMDVFRPGHADYTYWQKYGIRDYRGGGRSSARETAVRVAAGAIAKKWLHERYGIVIRGYMAQLGPIAIPFKNWEVINQNPFFVADDDYVPKLEAFMDALRKSGDSAGARINVIAEGVPVGWGEPVYDRLDADIAYAMMSINAAKGVEIGAGFNSVTQKGTEHSDEITPEGFLSNNAGGILGGISSSQPITVSVAIKPTSSIRLGRRSIDKAGNPVIVETHGRHDPCVGIRATPIVEAMLAIVLMDHALRHRGQNEDVVCTTPKVPGNIINPTNPVTTQPDVRRAEDPEPDENS.

NADP(+) contacts are provided by Arg-48 and Arg-54. Residues 125-127, 238-239, Gly-278, 293-297, and Arg-319 contribute to the FMN site; these read RSS, NA, and KPTSS. The tract at residues 360–390 is disordered; the sequence is KVPGNIINPTNPVTTQPDVRRAEDPEPDENS. The segment covering 366–376 has biased composition (polar residues); it reads INPTNPVTTQP.

Belongs to the chorismate synthase family. As to quaternary structure, homotetramer. FMNH2 serves as cofactor.

It catalyses the reaction 5-O-(1-carboxyvinyl)-3-phosphoshikimate = chorismate + phosphate. It participates in metabolic intermediate biosynthesis; chorismate biosynthesis; chorismate from D-erythrose 4-phosphate and phosphoenolpyruvate: step 7/7. Catalyzes the anti-1,4-elimination of the C-3 phosphate and the C-6 proR hydrogen from 5-enolpyruvylshikimate-3-phosphate (EPSP) to yield chorismate, which is the branch point compound that serves as the starting substrate for the three terminal pathways of aromatic amino acid biosynthesis. This reaction introduces a second double bond into the aromatic ring system. This is Chorismate synthase from Nitrosomonas eutropha (strain DSM 101675 / C91 / Nm57).